A 101-amino-acid chain; its full sequence is Ferredoxin-3 (101 aa).

2 consecutive 4Fe-4S ferredoxin-type domains span residues 17-46 and 70-100; these read YLMK…LHGL and KVMA…HAAL. [4Fe-4S] cluster contacts are provided by Cys26, Cys29, Cys32, Cys36, Cys80, Cys83, Cys86, and Cys90.

In terms of assembly, homodimer. [4Fe-4S] cluster is required as a cofactor.

Its function is as follows. Ferredoxins are iron-sulfur proteins that transfer electrons in a wide variety of metabolic reactions. The chain is Ferredoxin-3 (fdxB) from Rhodobacter capsulatus (Rhodopseudomonas capsulata).